The chain runs to 314 residues: L-lactate dehydrogenase 1 (314 aa).

Residues V16, D37, K42, Y68, and 82 to 83 (GL) each bind NAD(+). Substrate contacts are provided by residues Q85, R91, and 123–126 (NPVD). NAD(+)-binding positions include 121–123 (ATN) and S146. Residue 151–154 (DSAR) participates in substrate binding. The beta-D-fructose 1,6-bisphosphate site is built by R156 and H171. H178 acts as the Proton acceptor in catalysis. Residue Y223 is modified to Phosphotyrosine. Substrate is bound at residue T232.

It belongs to the LDH/MDH superfamily. LDH family. As to quaternary structure, homotetramer.

The protein resides in the cytoplasm. It catalyses the reaction (S)-lactate + NAD(+) = pyruvate + NADH + H(+). It participates in fermentation; pyruvate fermentation to lactate; (S)-lactate from pyruvate: step 1/1. With respect to regulation, allosterically activated by fructose 1,6-bisphosphate (FBP). Catalyzes the conversion of lactate to pyruvate. In Bacillus anthracis, this protein is L-lactate dehydrogenase 1.